The chain runs to 334 residues: Adenine deaminase (334 aa).

Residues H17, H19, and H197 each contribute to the Zn(2+) site. E200 serves as the catalytic Proton donor. Position 278 (D278) interacts with Zn(2+). D279 contributes to the substrate binding site.

The protein belongs to the metallo-dependent hydrolases superfamily. Adenosine and AMP deaminases family. Adenine deaminase type 2 subfamily. Requires Zn(2+) as cofactor.

The enzyme catalyses adenine + H2O + H(+) = hypoxanthine + NH4(+). Its function is as follows. Catalyzes the hydrolytic deamination of adenine to hypoxanthine. Plays an important role in the purine salvage pathway and in nitrogen catabolism. The protein is Adenine deaminase of Rhodospirillum rubrum (strain ATCC 11170 / ATH 1.1.1 / DSM 467 / LMG 4362 / NCIMB 8255 / S1).